A 309-amino-acid chain; its full sequence is Taste receptor type 2 member 20 (309 aa).

At 1 to 6 (MMSFLH) the chain is on the extracellular side. The helical transmembrane segment at 7–27 (IVFSILVVVAFILGNFANGFI) threads the bilayer. Topologically, residues 28–46 (ALINFIAWVKRQKISSADQ) are cytoplasmic. The helical transmembrane segment at 47–67 (IIAALAVSRVGLLWVILLHWY) threads the bilayer. The Extracellular segment spans residues 68 to 79 (STVLNPTSSNLK). Residues 80–100 (VIIFISNAWAVTNHFSIWLAT) form a helical membrane-spanning segment. At 101 to 125 (SLSIFYLLKIVNFSRLIFHHLKRKA) the chain is on the cytoplasmic side. Residues 126-146 (KSVVLVIVLGSLFFLVCHLVM) form a helical membrane-spanning segment. Over 147–178 (KHTYINVWTEECEGNVTWKIKLRNAMHLSNLT) the chain is Extracellular. 2 N-linked (GlcNAc...) asparagine glycosylation sites follow: Asn161 and Asn176. The chain crosses the membrane as a helical span at residues 179 to 199 (VAMLANLIPFTLTLISFLLLI). Topologically, residues 200–229 (YSLCKHLKKMQLHGKGSQDPSTKIHIKALQ) are cytoplasmic. Residues 230-250 (TVTSFLILLAIYFLCLIISFW) form a helical membrane-spanning segment. Topologically, residues 251–259 (NFKMRPKEI) are extracellular. Residues 260 to 280 (VLMLCQAFGIIYPSFHSFILI) traverse the membrane as a helical segment. Over 281–309 (WGNKTLKQTFLSVLWQVTCWAKGQNQSTP) the chain is Cytoplasmic.

Belongs to the G-protein coupled receptor T2R family. In terms of tissue distribution, expressed in subsets of taste receptor cells of the tongue and exclusively in gustducin-positive cells.

It localises to the membrane. Functionally, receptor that may play a role in the perception of bitterness and is gustducin-linked. May play a role in sensing the chemical composition of the gastrointestinal content. The activity of this receptor may stimulate alpha gustducin, mediate PLC-beta-2 activation and lead to the gating of TRPM5. In Homo sapiens (Human), this protein is Taste receptor type 2 member 20 (TAS2R20).